We begin with the raw amino-acid sequence, 901 residues long: HTH-type transcriptional regulator MalT (901 aa).

39-46 (SPAGYGKT) contacts ATP. In terms of domain architecture, HTH luxR-type spans 829–894 (ELIRTSPLTQ…AAVQHAQKLL (66 aa)). Residues 853-872 (NEQIAGELEVAATTIKTHIR) constitute a DNA-binding region (H-T-H motif).

It belongs to the MalT family. As to quaternary structure, monomer in solution. Oligomerizes to an active state in the presence of the positive effectors ATP and maltotriose.

Its activity is regulated as follows. Activated by ATP and maltotriose, which are both required for DNA binding. Its function is as follows. Positively regulates the transcription of the maltose regulon whose gene products are responsible for uptake and catabolism of malto-oligosaccharides. Specifically binds to the promoter region of its target genes, recognizing a short DNA motif called the MalT box. The chain is HTH-type transcriptional regulator MalT from Shigella boydii serotype 4 (strain Sb227).